Here is a 453-residue protein sequence, read N- to C-terminus: Chromosomal replication initiator protein DnaA (453 aa).

A domain I, interacts with DnaA modulators region spans residues 1–74; it reads MKEKQFWNRI…GFEIYDAEIT (74 aa). The tract at residues 74-113 is domain II; sequence TPHYIFTKPQDTTSSQVEEATNLTLYDYSPKLVSIPYSDT. The tract at residues 114–331 is domain III, AAA+ region; the sequence is GLKEKYTFDN…GAINDITLIA (218 aa). ATP is bound by residues Gly158, Gly160, Lys161, and Thr162. The segment at 332–453 is domain IV, binds dsDNA; the sequence is RVKKIKDITI…EIESIKKKIK (122 aa).

The protein belongs to the DnaA family. Oligomerizes as a right-handed, spiral filament on DNA at oriC.

It is found in the cytoplasm. Plays an essential role in the initiation and regulation of chromosomal replication. ATP-DnaA binds to the origin of replication (oriC) to initiate formation of the DNA replication initiation complex once per cell cycle. Binds the DnaA box (a 9 base pair repeat at the origin) and separates the double-stranded (ds)DNA. Forms a right-handed helical filament on oriC DNA; dsDNA binds to the exterior of the filament while single-stranded (ss)DNA is stabiized in the filament's interior. The ATP-DnaA-oriC complex binds and stabilizes one strand of the AT-rich DNA unwinding element (DUE), permitting loading of DNA polymerase. After initiation quickly degrades to an ADP-DnaA complex that is not apt for DNA replication. Binds acidic phospholipids. The sequence is that of Chromosomal replication initiator protein DnaA from Streptococcus pneumoniae (strain P1031).